The primary structure comprises 366 residues: NADH-quinone oxidoreductase subunit D (366 aa).

This sequence belongs to the complex I 49 kDa subunit family. As to quaternary structure, NDH-1 is composed of 14 different subunits. Subunits NuoB, C, D, E, F, and G constitute the peripheral sector of the complex.

The protein localises to the cell membrane. The enzyme catalyses a quinone + NADH + 5 H(+)(in) = a quinol + NAD(+) + 4 H(+)(out). Functionally, NDH-1 shuttles electrons from NADH, via FMN and iron-sulfur (Fe-S) centers, to quinones in the respiratory chain. The immediate electron acceptor for the enzyme in this species is believed to be a menaquinone. Couples the redox reaction to proton translocation (for every two electrons transferred, four hydrogen ions are translocated across the cytoplasmic membrane), and thus conserves the redox energy in a proton gradient. This chain is NADH-quinone oxidoreductase subunit D, found in Bacillus anthracis.